The following is a 283-amino-acid chain: ATP phosphoribosyltransferase (283 aa).

This sequence belongs to the ATP phosphoribosyltransferase family. Long subfamily. Mg(2+) is required as a cofactor.

The protein localises to the cytoplasm. It catalyses the reaction 1-(5-phospho-beta-D-ribosyl)-ATP + diphosphate = 5-phospho-alpha-D-ribose 1-diphosphate + ATP. The protein operates within amino-acid biosynthesis; L-histidine biosynthesis; L-histidine from 5-phospho-alpha-D-ribose 1-diphosphate: step 1/9. Feedback inhibited by histidine. In terms of biological role, catalyzes the condensation of ATP and 5-phosphoribose 1-diphosphate to form N'-(5'-phosphoribosyl)-ATP (PR-ATP). Has a crucial role in the pathway because the rate of histidine biosynthesis seems to be controlled primarily by regulation of HisG enzymatic activity. This is ATP phosphoribosyltransferase from Methanopyrus kandleri (strain AV19 / DSM 6324 / JCM 9639 / NBRC 100938).